Consider the following 316-residue polypeptide: MSGNDLFPSTIYCIESKIESPRNLYGRFLIEPLAIGQGITVGNTLRRILLGDIEGAAITSVKIPGANNEFSILPGIRESVLEILLNLKEIVFRTKSLDVQKGYLSIQGPCVVKAANLQLPTSIEVVDGGQYIATLSGNANLDMEFVINTGKGYQMADYAIKKNSYISSLPVDAIFMPIHKVNYMVEQDHTSKFLTERVILEIWTNGSISPRDALDIGIKKVIDLFNPLHHCSSEYSTNKNDFSTESKINDILVEELELSVRAYNCLKRAQIHTISDLLAYSQEDLLEIKNFGRRSAEEVIEALEKKLNIYLPKEKY.

Residues 1–232 (MSGNDLFPST…DLFNPLHHCS (232 aa)) form an alpha N-terminal domain (alpha-NTD) region. Residues 247–316 (KINDILVEEL…LNIYLPKEKY (70 aa)) are alpha C-terminal domain (alpha-CTD).

It belongs to the RNA polymerase alpha chain family. In terms of assembly, in plastids the minimal PEP RNA polymerase catalytic core is composed of four subunits: alpha, beta, beta', and beta''. When a (nuclear-encoded) sigma factor is associated with the core the holoenzyme is formed, which can initiate transcription.

It localises to the plastid. The protein resides in the chloroplast. The enzyme catalyses RNA(n) + a ribonucleoside 5'-triphosphate = RNA(n+1) + diphosphate. In terms of biological role, DNA-dependent RNA polymerase catalyzes the transcription of DNA into RNA using the four ribonucleoside triphosphates as substrates. The sequence is that of DNA-directed RNA polymerase subunit alpha from Mesostigma viride (Green alga).